Consider the following 643-residue polypeptide: Threonine--tRNA ligase (643 aa).

The TGS domain occupies M1–T61. Positions D240–P540 are catalytic. 3 residues coordinate Zn(2+): C335, H386, and H517.

It belongs to the class-II aminoacyl-tRNA synthetase family. As to quaternary structure, homodimer. The cofactor is Zn(2+).

It is found in the cytoplasm. The catalysed reaction is tRNA(Thr) + L-threonine + ATP = L-threonyl-tRNA(Thr) + AMP + diphosphate + H(+). Its function is as follows. Catalyzes the attachment of threonine to tRNA(Thr) in a two-step reaction: L-threonine is first activated by ATP to form Thr-AMP and then transferred to the acceptor end of tRNA(Thr). Also edits incorrectly charged L-seryl-tRNA(Thr). The chain is Threonine--tRNA ligase from Clostridium botulinum (strain Alaska E43 / Type E3).